We begin with the raw amino-acid sequence, 684 residues long: Glycine--tRNA ligase beta subunit (684 aa).

The protein belongs to the class-II aminoacyl-tRNA synthetase family. As to quaternary structure, tetramer of two alpha and two beta subunits.

Its subcellular location is the cytoplasm. It carries out the reaction tRNA(Gly) + glycine + ATP = glycyl-tRNA(Gly) + AMP + diphosphate. The chain is Glycine--tRNA ligase beta subunit from Pseudomonas aeruginosa (strain LESB58).